The chain runs to 495 residues: Carotenoid 3,4-desaturase (495 aa).

Belongs to the carotenoid/retinoid oxidoreductase family.

It catalyses the reaction dihydroisopentenyldehydrorhodopin + A = isopentenyldehydrorhodopin + AH2. The enzyme catalyses dihydrobisanhydrobacterioruberin + A = bisanhydrobacterioruberin + AH2. It functions in the pathway carotenoid biosynthesis. In terms of biological role, involved in the biosynthesis of the acyclic C50 carotenoid bacterioruberin (BR). CrtD is involved in the desaturation reactions that form double bonds at C-3,4 of dihydroisopentenyldehydrorhodopin (DH-IDR) and C-3',4' of dihydrobisanhydrobacterioruberin (DH-BABR) to yield isopentenyld ehydrorhodopin (IDR) and bisanhydrobacterioruberin (BABR), respectively. This Haloarcula japonica (strain ATCC 49778 / DSM 6131 / JCM 7785 / NBRC 101032 / NCIMB 13157 / TR-1) protein is Carotenoid 3,4-desaturase.